Consider the following 128-residue polypeptide: Large ribosomal subunit protein bL17 (128 aa).

It belongs to the bacterial ribosomal protein bL17 family. In terms of assembly, part of the 50S ribosomal subunit. Contacts protein L32.

This Streptococcus equi subsp. equi (strain 4047) protein is Large ribosomal subunit protein bL17.